The following is a 500-amino-acid chain: MSYFPWLTLIVVFPIFAGCFIFFLPHKGNKVVRWYTMGICLLELLIMTYVFCYHFKLDDPLIQMEDDFQWINVFDFHWRLGIDGLSIGPILLTGFITTLATLAAWPVTRDSRLFHFLMLAMYSGQIGLFSSRDLLLFFMMWELELIPVYLLLSMWGGKKRLYSATKFILYTAGGSIFLLIGVLGMGLYGSNGPTLNFETVANQSYPLGLEILLYFGFLIAFAVKLPIIPLHTWLPDTHGEAHYSTCMLLAGILLKMGAYGLIRINMEFLSHAHSIFSPWLVIVGTIQIIYAALTSLGQRNLKKRIAYSSVSHMGFIIIGIGSLTNTGLNGAILQLLSHGFIGAALFFLGGTSCDRIRLVYLDEMGGISIPMPKIFTMFSSFSMASLALPGMSGFVAELMVFLGIITSQKYLLMTKIIITLVMAIGIILTPIYLLSMLRQMFYGYKLFNLSNSFFVDSGPRELFVSICIFLPVIAIGIYPDLVISLSVDKVQQILSNYYYR.

Helical transmembrane passes span 4–24, 35–55, 87–107, 113–130, 134–154, 167–187, 208–228, 242–262, 274–294, 305–325, 330–350, 386–406, 416–436, and 463–483; these read FPWL…IFFL, YTMG…CYHF, IGPI…AWPV, LFHF…GLFS, LLLF…LLSM, FILY…GMGL, GLEI…LPII, HYST…YGLI, SIFS…AALT, IAYS…SLTN, GAIL…FLGG, LALP…GIIT, IIIT…LLSM, and FVSI…DLVI.

This sequence belongs to the complex I subunit 4 family.

The protein localises to the plastid. Its subcellular location is the chloroplast thylakoid membrane. The catalysed reaction is a plastoquinone + NADH + (n+1) H(+)(in) = a plastoquinol + NAD(+) + n H(+)(out). The enzyme catalyses a plastoquinone + NADPH + (n+1) H(+)(in) = a plastoquinol + NADP(+) + n H(+)(out). The polypeptide is NAD(P)H-quinone oxidoreductase chain 4, chloroplastic (Lemna minor (Common duckweed)).